We begin with the raw amino-acid sequence, 103 residues long: Large ribosomal subunit protein uL24 (103 aa).

Belongs to the universal ribosomal protein uL24 family. In terms of assembly, part of the 50S ribosomal subunit.

In terms of biological role, one of two assembly initiator proteins, it binds directly to the 5'-end of the 23S rRNA, where it nucleates assembly of the 50S subunit. Functionally, one of the proteins that surrounds the polypeptide exit tunnel on the outside of the subunit. The polypeptide is Large ribosomal subunit protein uL24 (Geobacillus stearothermophilus (Bacillus stearothermophilus)).